The chain runs to 323 residues: Lipoyl synthase (323 aa).

The [4Fe-4S] cluster site is built by cysteine 69, cysteine 74, cysteine 80, cysteine 95, cysteine 99, cysteine 102, and serine 310. The 219-residue stretch at 81–299 (WTHGTLTVMI…EAWGYELGFR (219 aa)) folds into the Radical SAM core domain.

It belongs to the radical SAM superfamily. Lipoyl synthase family. [4Fe-4S] cluster serves as cofactor.

It localises to the cytoplasm. The enzyme catalyses [[Fe-S] cluster scaffold protein carrying a second [4Fe-4S](2+) cluster] + N(6)-octanoyl-L-lysyl-[protein] + 2 oxidized [2Fe-2S]-[ferredoxin] + 2 S-adenosyl-L-methionine + 4 H(+) = [[Fe-S] cluster scaffold protein] + N(6)-[(R)-dihydrolipoyl]-L-lysyl-[protein] + 4 Fe(3+) + 2 hydrogen sulfide + 2 5'-deoxyadenosine + 2 L-methionine + 2 reduced [2Fe-2S]-[ferredoxin]. Its pathway is protein modification; protein lipoylation via endogenous pathway; protein N(6)-(lipoyl)lysine from octanoyl-[acyl-carrier-protein]: step 2/2. Its function is as follows. Catalyzes the radical-mediated insertion of two sulfur atoms into the C-6 and C-8 positions of the octanoyl moiety bound to the lipoyl domains of lipoate-dependent enzymes, thereby converting the octanoylated domains into lipoylated derivatives. The protein is Lipoyl synthase of Thermus thermophilus (strain ATCC 27634 / DSM 579 / HB8).